Consider the following 214-residue polypeptide: Cell division protein SepF (214 aa).

Residues 25–51 are disordered; sequence EDDDRGARAGGYSRRPREDRFEEEAYG.

It belongs to the SepF family. Homodimer. Interacts with FtsZ.

The protein localises to the cytoplasm. Its function is as follows. Cell division protein that is part of the divisome complex and is recruited early to the Z-ring. Probably stimulates Z-ring formation, perhaps through the cross-linking of FtsZ protofilaments. Its function overlaps with FtsA. This is Cell division protein SepF from Mycolicibacterium smegmatis (strain ATCC 700084 / mc(2)155) (Mycobacterium smegmatis).